Reading from the N-terminus, the 30-residue chain is Protein ScvA (30 aa).

Residues 1–30 are disordered; the sequence is MERQNVQQQRGKDQRPQRPGASNPRRPNQR.

Its function is as follows. Might be involved in DNA-binding; the protein binds DNA in gel-shift assays and immunogold electron microscopy shows labelling of condensed chromatin. The polypeptide is Protein ScvA (scvA) (Coxiella burnetii (strain RSA 493 / Nine Mile phase I)).